The primary structure comprises 627 residues: Neuronal acetylcholine receptor subunit alpha-4 (627 aa).

The signal sequence occupies residues 1–26 (MELGGPGAPRLLPPLLLLLGTGLLRA). Residues 27-249 (SSHVETRAHA…RRLPLFYTIN (223 aa)) are Extracellular-facing. A glycan (N-linked (GlcNAc...) asparagine) is linked at Asn-57. Ca(2+) contacts are provided by Val-76 and Glu-78. Asn-107 and Asn-174 each carry an N-linked (GlcNAc...) asparagine glycan. Disulfide bonds link Cys-161/Cys-175 and Cys-225/Cys-226. Residues 250–269 (LIIPCLLISCLTVLVFYLPS) form a helical membrane-spanning segment. Cys-271 carries S-palmitoyl cysteine lipidation. A run of 2 helical transmembrane segments spans residues 275–291 (ITLC…FLLL) and 306–330 (IGEY…VLNV). Over 331–600 (HHRSPRTHTM…WKYVAMVIDR (270 aa)) the chain is Cytoplasmic. 2 disordered regions span residues 382-481 (PRFW…VEGG) and 496-561 (DDAA…LPLS). Ser-424 is modified (phosphoserine). Residues 501–511 (EADGQAAGALA) show a composition bias toward low complexity. 2 positions are modified to phosphoserine: Ser-538 and Ser-541. Positions 538 to 548 (SSVSPSATVKT) are enriched in polar residues. Residues 601-619 (IFLWMFIIVCLLGTVGLFL) traverse the membrane as a helical segment.

This sequence belongs to the ligand-gated ion channel (TC 1.A.9) family. Acetylcholine receptor (TC 1.A.9.1) subfamily. Alpha-4/CHRNA4 sub-subfamily. Neuronal AChR is composed of two different types of subunits: alpha and beta. CHRNA4 forms heteropentameric neuronal acetylcholine receptors with CHRNB2 and CHRNB4, as well as CHRNA5 and CHRNB3 as accesory subunits. Found in two major stoichiometric forms, LS (low agonist sensitivity): (CHRNA4)3:(CHRNB2)2 and HS (high agonist sensitivity): (CHRNA4)2:(CHRNB2)3, the two stoichiometric forms differ in their unitary conductance, calcium permeability, ACh sensitivity and potentiation by divalent cation. Cells produce predominantly an (CHRNA4)3:(CHRNB2)2 nAChR. The (CHRNA4)2:(CHRNB2)3 expression is selectively up-regulated by nicotine and has lower single channel conductance and calcium permeability. In the striatum, also forms CHRNA4:CHRNA6:CHRNB2 complexes. Also found in the stoichiometric form: (CHRNA4:CHRNB2)2:CHRNB3. Interacts with RIC3; which is required for proper folding and assembly. Interacts with LYPD6.

It localises to the synaptic cell membrane. The protein resides in the cell membrane. The catalysed reaction is Ca(2+)(in) = Ca(2+)(out). It catalyses the reaction K(+)(in) = K(+)(out). It carries out the reaction Na(+)(in) = Na(+)(out). Its activity is regulated as follows. Activated by a myriad of ligands such as acetylcholine, cytisine, nicotine, choline and epibatidine. Channel potentiation by calcium is stoichiometry-selective, CHRNA4:CHRNB2 nACh receptor is achieved by calcium association with topographically distinct sites framed by anionic residues within the CHRNA4 subunit and between the CHRNA4 and CHRNB2 subunits. nAChR activity is inhibited by the antagonist alpha-conotoxins BuIA, PnIA, GID and MII, small disulfide-constrained peptides from cone snails. In terms of biological role, component of neuronal acetylcholine receptors (nAChRs) that function as pentameric, ligand-gated cation channels with high calcium permeability among other activities. nAChRs are excitatory neurotrasnmitter receptors formed by a collection of nAChR subunits known to mediate synaptic transmission in the nervous system and the neuromuscular junction. Each nAchR subunit confers differential attributes to channel properties, including activation, deactivation and desensitization kinetics, pH sensitivity, cation permeability, and binding to allosteric modulators. CHRNA4 forms heteropentameric neuronal acetylcholine receptors with CHRNB2 and CHRNB4, as well as CHRNA5 and CHRNB3 as accesory subunits. Is the most abundant nAChR subtype expressed in the central nervous system. Found in two major stoichiometric forms,(CHRNA4)3:(CHRNB2)2 and (CHRNA4)2:(CHRNB2)3, the two stoichiometric forms differ in their unitary conductance, calcium permeability, ACh sensitivity and potentiation by divalent cation. Involved in the modulation of calcium-dependent signaling pathways, influences the release of neurotransmitters, including dopamine, glutamate and GABA. This chain is Neuronal acetylcholine receptor subunit alpha-4, found in Homo sapiens (Human).